A 79-amino-acid chain; its full sequence is uncharacterized protein (79 aa).

This is an uncharacterized protein from Escherichia coli (strain K12).